Consider the following 1315-residue polypeptide: Claspin (1315 aa).

2 disordered regions span residues Glu-22–Leu-276 and Pro-345–Thr-474. Phosphoserine occurs at positions 26, 42, 46, 53, 65, and 67. Acidic residues predominate over residues Ser-65 to Asp-74. A compositionally biased stretch (polar residues) spans Asn-91–Ser-101. Residues Asp-108–Pro-118 are compositionally biased toward acidic residues. Residues Ser-109, Ser-112, and Ser-119 each carry the phosphoserine modification. The segment covering Ser-119 to Ala-128 has biased composition (polar residues). Composition is skewed to basic and acidic residues over residues Leu-153–Ile-178 and Thr-186–Leu-197. Residues Glu-159 to Arg-187 are a coiled coil. A compositionally biased stretch (acidic residues) spans Glu-205–Leu-228. A Phosphoserine modification is found at Ser-220. Over residues Val-235–Lys-245 the composition is skewed to basic residues. The residue at position 255 (Ser-255) is a Phosphoserine. Composition is skewed to basic and acidic residues over residues Ala-391–Pro-415 and Glu-455–Pro-470. The residue at position 522 (Ser-522) is a Phosphoserine. Residues Glu-599–Leu-626 are a coiled coil. The disordered stretch occupies residues Ala-625 to Leu-691. The segment covering Glu-632–Thr-657 has biased composition (acidic residues). Basic and acidic residues predominate over residues Lys-669 to Thr-679. Residues Ser-698, Ser-701, Ser-709, Ser-722, and Ser-740 each carry the phosphoserine modification. Residues Met-713–His-750 are disordered. Low complexity predominate over residues Ser-741–His-750. Residues Ser-785, Ser-787, Ser-810, Ser-816, and Ser-823 each carry the phosphoserine modification. Lys-868 is subject to N6-acetyllysine. CKB motif repeat units lie at residues Glu-887–Phe-896 and Glu-917–Phe-926. Thr-893 bears the Phosphothreonine; by CHEK1 mark. Disordered regions lie at residues Gly-924–Glu-1002 and Glu-1032–Glu-1052. Ser-932 is modified (phosphoserine). Residues Glu-954–Phe-963 form a CKB motif 3 repeat. Residues Asp-966–Glu-1063 form an acidic patch region. 3 stretches are compositionally biased toward acidic residues: residues Arg-967–Gly-977, Ser-990–Glu-1002, and Gly-1043–Glu-1052. Phosphoserine is present on residues Ser-990, Ser-996, and Ser-998. Residues Glu-1001–Glu-1036 adopt a coiled-coil conformation. Residues Ser-1133 and Ser-1265 each carry the phosphoserine modification. The disordered stretch occupies residues Leu-1264–Ser-1315.

This sequence belongs to the claspin family. In terms of assembly, interacts (phosphorylation-dependent) with CHEK1; regulates CLSPN function in checkpoint for DNA damage and replication. Interacts with ATR and RAD9A and these interactions are slightly reduced during checkpoint activation. Interacts with BRCA1 and this interaction increases during checkpoint activation. Interacts with TIMELESS; the interaction is required for leading-strand replication. Associates with the MCM2-7 complex and other replisome factors. Interacts (via the acidic patch) with CDC7; the interaction is required for phosphorylation of MCM proteins and CLASPIN by CDC7. Interacts with PCNA. Interacts with FZR1. Post-translationally, phosphorylated. Undergoes ATR-dependent phosphorylation by CHEK1 during activation of DNA replication or damage checkpoints. Phosphorylation by CSNK1G1/CK1 promotes CHEK1 binding. Phosphorylated by CDC7 during DNA replication, phosphorylation inhibits interaction between the acidic patch and N-terminal segments leading to increased binding to DNA and PCNA. Ubiquitinated by the anaphase promoting complex/cyclosome (APC/C) during G1 phase, leading to its degradation by the proteasome. Ubiquitination is mediated via its interaction with FZR1/CDH1. Following DNA damage, it is deubiquitinated by USP28 in G2 phase, preventing its degradation. In terms of processing, proteolytically cleaved by caspase-7 (CASP7) in response to apoptosis, leading to its inactivation.

The protein resides in the nucleus. Its function is as follows. Required for checkpoint mediated cell cycle arrest in response to inhibition of DNA replication or to DNA damage induced by both ionizing and UV irradiation. Adapter protein which binds to BRCA1 and the checkpoint kinase CHEK1 and facilitates the ATR-dependent phosphorylation of both proteins. Also required to maintain normal rates of replication fork progression during unperturbed DNA replication. Binds directly to DNA, with particular affinity for branched or forked molecules and interacts with multiple protein components of the replisome such as the MCM2-7 complex and TIMELESS. Important for initiation of DNA replication, recruits kinase CDC7 to phosphorylate MCM2-7 components. The polypeptide is Claspin (Clspn) (Mus musculus (Mouse)).